The following is a 105-amino-acid chain: D-galactoside-specific lectin (105 aa).

Residues 13–103 (VCEDSSLTIS…KYLAVTYICS (91 aa)) enclose the SUEL-type lectin domain.

As to quaternary structure, homodimer; disulfide-linked.

It is found in the cytoplasm. This protein binds D-galactoside. May have an important role in the activation of eggs (triggered by fertilization), or in their subsequent differentiation. The dimeric form is essential for hemagglutination activity. This is D-galactoside-specific lectin from Heliocidaris crassispina (Sea urchin).